The sequence spans 310 residues: Zinc finger protein-like 1 (310 aa).

The B box-type; degenerate zinc finger occupies methionine 1–tryptophan 43. Residues methionine 1–glycine 266 lie on the Cytoplasmic side of the membrane. The RING-type; degenerate zinc-finger motif lies at cysteine 53 to asparagine 101. The disordered stretch occupies residues proline 145 to aspartate 231. The span at leucine 148 to proline 165 shows a compositional bias: polar residues. Residues lysine 213–proline 224 show a composition bias toward basic and acidic residues. A helical transmembrane segment spans residues leucine 267–glycine 287. Over arginine 288–serine 310 the chain is Lumenal.

This sequence belongs to the ZFPL1 family. In terms of assembly, interacts with GOLGA2/GM130. Post-translationally, phosphorylated. As to expression, expressed strongly in the exocrine pancreas.

It localises to the golgi apparatus. The protein localises to the cis-Golgi network membrane. In terms of biological role, required for cis-Golgi integrity and efficient ER to Golgi transport. Involved in the maintenance of the integrity of the cis-Golgi, possibly via its interaction with GOLGA2/GM130. In Homo sapiens (Human), this protein is Zinc finger protein-like 1 (ZFPL1).